Consider the following 340-residue polypeptide: Arginase 1, mitochondrial (340 aa).

Residues 1-24 constitute a mitochondrion transit peptide; that stretch reads MGGVAAGTRWIHHVRRLSAAKVSA. Positions 159, 183, 185, and 187 each coordinate Mn(2+). Residues 185-189 and 193-195 contribute to the substrate site; these read HPDIY and EGN. Residues aspartate 268 and aspartate 270 each contribute to the Mn(2+) site. Position 311 (glutamate 311) interacts with substrate.

Belongs to the arginase family. Mn(2+) is required as a cofactor.

The protein resides in the mitochondrion. The catalysed reaction is L-arginine + H2O = urea + L-ornithine. Its pathway is nitrogen metabolism; urea cycle; L-ornithine and urea from L-arginine: step 1/1. In terms of biological role, catalyzes the hydrolysis of L-arginine to urea and L-ornithine. The latter can be utilized in the urea cycle or as a precursor for the synthesis of both polyamines and proline. This Oryza sativa subsp. japonica (Rice) protein is Arginase 1, mitochondrial (ARG1).